Reading from the N-terminus, the 173-residue chain is Protein tyrosine phosphatase type IVA 1 (173 aa).

In terms of domain architecture, Tyrosine-protein phosphatase spans 8 to 161 (APVEVTYKNM…YRPKMRLRFK (154 aa)). Cys-49 and Cys-104 are joined by a disulfide. Asp-72 acts as the Proton donor in catalysis. The interval 97–132 (GCCIAVHCVAGLGRAPVLVALALIEGGMKYEDAVQF) is interaction with ATF5. Cys-104 serves as the catalytic Phosphocysteine intermediate. Position 105–110 (105–110 (VAGLGR)) interacts with phosphate. Residue Arg-110 coordinates substrate. Cys-170 carries the cysteine methyl ester modification. The S-farnesyl cysteine moiety is linked to residue Cys-170. The propeptide at 171 to 173 (CIQ) is removed in mature form.

It belongs to the protein-tyrosine phosphatase family. In terms of assembly, homotrimer. Interacts with ATF5 and tubulin. Post-translationally, farnesylated. Farnesylation is required for membrane targeting.

It localises to the cell membrane. Its subcellular location is the early endosome. The protein localises to the endoplasmic reticulum. The protein resides in the cytoplasm. It is found in the cytoskeleton. It localises to the spindle. Its subcellular location is the nucleus. It carries out the reaction O-phospho-L-tyrosyl-[protein] + H2O = L-tyrosyl-[protein] + phosphate. With respect to regulation, inhibited by sodium orthovanadate and pentamidine. Its function is as follows. Protein tyrosine phosphatase which stimulates progression from G1 into S phase during mitosis. May play a role in the development and maintenance of differentiating epithelial tissues. The sequence is that of Protein tyrosine phosphatase type IVA 1 (PTP4A1) from Pongo abelii (Sumatran orangutan).